The primary structure comprises 303 residues: ATP phosphoribosyltransferase (303 aa).

Belongs to the ATP phosphoribosyltransferase family. Long subfamily. Mg(2+) serves as cofactor.

The protein localises to the cytoplasm. It carries out the reaction 1-(5-phospho-beta-D-ribosyl)-ATP + diphosphate = 5-phospho-alpha-D-ribose 1-diphosphate + ATP. The protein operates within amino-acid biosynthesis; L-histidine biosynthesis; L-histidine from 5-phospho-alpha-D-ribose 1-diphosphate: step 1/9. With respect to regulation, feedback inhibited by histidine. Functionally, catalyzes the condensation of ATP and 5-phosphoribose 1-diphosphate to form N'-(5'-phosphoribosyl)-ATP (PR-ATP). Has a crucial role in the pathway because the rate of histidine biosynthesis seems to be controlled primarily by regulation of HisG enzymatic activity. This chain is ATP phosphoribosyltransferase, found in Haemophilus influenzae (strain 86-028NP).